The following is a 1400-amino-acid chain: DNA-directed RNA polymerase subunit beta' (1400 aa).

C71, C73, C86, and C89 together coordinate Zn(2+). Mg(2+) is bound by residues D462, D464, and D466. C810, C884, C891, and C894 together coordinate Zn(2+).

The protein belongs to the RNA polymerase beta' chain family. As to quaternary structure, the RNAP catalytic core consists of 2 alpha, 1 beta, 1 beta' and 1 omega subunit. When a sigma factor is associated with the core the holoenzyme is formed, which can initiate transcription. Requires Mg(2+) as cofactor. Zn(2+) is required as a cofactor.

It catalyses the reaction RNA(n) + a ribonucleoside 5'-triphosphate = RNA(n+1) + diphosphate. In terms of biological role, DNA-dependent RNA polymerase catalyzes the transcription of DNA into RNA using the four ribonucleoside triphosphates as substrates. The protein is DNA-directed RNA polymerase subunit beta' of Rhodopseudomonas palustris (strain TIE-1).